Consider the following 409-residue polypeptide: Peptidase T (409 aa).

His-78 lines the Zn(2+) pocket. Asp-80 is a catalytic residue. Zn(2+) is bound at residue Asp-140. The active-site Proton acceptor is Glu-173. Positions 174, 196, and 379 each coordinate Zn(2+).

It belongs to the peptidase M20B family. Zn(2+) serves as cofactor.

Its subcellular location is the cytoplasm. It carries out the reaction Release of the N-terminal residue from a tripeptide.. Its function is as follows. Cleaves the N-terminal amino acid of tripeptides. This is Peptidase T from Escherichia coli O139:H28 (strain E24377A / ETEC).